The sequence spans 591 residues: Aspartate--tRNA(Asp/Asn) ligase (591 aa).

E176 contributes to the L-aspartate binding site. The tract at residues 200–203 is aspartate; sequence QLFK. Residue R222 coordinates L-aspartate. ATP is bound by residues 222-224 and Q231; that span reads RDE. H450 lines the L-aspartate pocket. E484 is a binding site for ATP. R491 is an L-aspartate binding site. Residue 536–539 participates in ATP binding; that stretch reads GLDR.

The protein belongs to the class-II aminoacyl-tRNA synthetase family. Type 1 subfamily. As to quaternary structure, homodimer.

It is found in the cytoplasm. The catalysed reaction is tRNA(Asx) + L-aspartate + ATP = L-aspartyl-tRNA(Asx) + AMP + diphosphate. Functionally, aspartyl-tRNA synthetase with relaxed tRNA specificity since it is able to aspartylate not only its cognate tRNA(Asp) but also tRNA(Asn). Reaction proceeds in two steps: L-aspartate is first activated by ATP to form Asp-AMP and then transferred to the acceptor end of tRNA(Asp/Asn). This is Aspartate--tRNA(Asp/Asn) ligase from Bacillus mycoides (strain KBAB4) (Bacillus weihenstephanensis).